We begin with the raw amino-acid sequence, 130 residues long: Small ribosomal subunit protein uS8 (130 aa).

It belongs to the universal ribosomal protein uS8 family. As to quaternary structure, part of the 30S ribosomal subunit. Contacts proteins S5 and S12.

In terms of biological role, one of the primary rRNA binding proteins, it binds directly to 16S rRNA central domain where it helps coordinate assembly of the platform of the 30S subunit. The polypeptide is Small ribosomal subunit protein uS8 (Vibrio atlanticus (strain LGP32) (Vibrio splendidus (strain Mel32))).